Here is a 302-residue protein sequence, read N- to C-terminus: N-acetyl-D-glucosamine kinase (302 aa).

ATP is bound by residues 4 to 11 (GFDVGGTK) and 133 to 140 (GFGGGLVF). 4 residues coordinate Zn(2+): His157, Cys177, Cys179, and Cys184.

Belongs to the ROK (NagC/XylR) family. NagK subfamily.

The enzyme catalyses N-acetyl-D-glucosamine + ATP = N-acetyl-D-glucosamine 6-phosphate + ADP + H(+). The protein operates within cell wall biogenesis; peptidoglycan recycling. Functionally, catalyzes the phosphorylation of N-acetyl-D-glucosamine (GlcNAc) derived from cell-wall degradation, yielding GlcNAc-6-P. In Aliivibrio salmonicida (strain LFI1238) (Vibrio salmonicida (strain LFI1238)), this protein is N-acetyl-D-glucosamine kinase.